The sequence spans 218 residues: Adenylate kinase (218 aa).

Glycine 10–threonine 15 is a binding site for ATP. Residues serine 30–valine 59 are NMP. Residues threonine 31, arginine 36, lysine 57–valine 59, glycine 85–arginine 88, and glutamine 92 each bind AMP. The interval glycine 122–aspartate 159 is LID. ATP contacts are provided by residues arginine 123 and threonine 132–tyrosine 133. A disordered region spans residues proline 127–aspartate 147. Residues arginine 156 and arginine 167 each contribute to the AMP site. Residue glycine 203 coordinates ATP.

The protein belongs to the adenylate kinase family. Monomer.

The protein localises to the cytoplasm. It carries out the reaction AMP + ATP = 2 ADP. It participates in purine metabolism; AMP biosynthesis via salvage pathway; AMP from ADP: step 1/1. Its function is as follows. Catalyzes the reversible transfer of the terminal phosphate group between ATP and AMP. Plays an important role in cellular energy homeostasis and in adenine nucleotide metabolism. This Paracidovorax citrulli (strain AAC00-1) (Acidovorax citrulli) protein is Adenylate kinase.